The sequence spans 288 residues: uncharacterized protein (288 aa).

2 disordered regions span residues 31–52 (KAVD…EAPS) and 179–288 (YPSK…VELK). The segment covering 206-217 (RPSSPTNFSKLI) has biased composition (polar residues). Residues 221-236 (YKDEWLQQQADSDKRA) are compositionally biased toward basic and acidic residues. Composition is skewed to low complexity over residues 237-249 (PQTP…SPSP) and 267-276 (AAESSPLSSA).

This is an uncharacterized protein from Bos taurus (Bovine).